The primary structure comprises 412 residues: Thyroxine-binding globulin (412 aa).

The signal sequence occupies residues 1 to 16 (MPLFLYMVLLVLGIHC). 5 N-linked (GlcNAc...) asparagine glycosylation sites follow: N20, N35, N98, N164, and N252. Thyroxine contacts are provided by N292 and K395.

The protein belongs to the serpin family. In terms of tissue distribution, expressed by the liver and secreted in plasma.

The protein localises to the secreted. Its function is as follows. Major thyroid hormone transport protein in serum. This Sus scrofa (Pig) protein is Thyroxine-binding globulin (SERPINA7).